An 840-amino-acid chain; its full sequence is Protein translocase subunit SecA (840 aa).

ATP is bound by residues glutamine 85, 103 to 107, and aspartate 492; that span reads GEGKT. Positions 787–821 are disordered; sequence QRERVAKETGASHGGDSQEIKKKPVKKEPKVGRND. The span at 802 to 819 shows a compositional bias: basic and acidic residues; the sequence is DSQEIKKKPVKKEPKVGR. Positions 823, 825, 834, and 835 each coordinate Zn(2+).

The protein belongs to the SecA family. As to quaternary structure, monomer and homodimer. Part of the essential Sec protein translocation apparatus which comprises SecA, SecYEG and auxiliary proteins SecDF. Other proteins may also be involved. Requires Zn(2+) as cofactor.

The protein localises to the cell membrane. Its subcellular location is the cytoplasm. The catalysed reaction is ATP + H2O + cellular proteinSide 1 = ADP + phosphate + cellular proteinSide 2.. Part of the Sec protein translocase complex. Interacts with the SecYEG preprotein conducting channel. Has a central role in coupling the hydrolysis of ATP to the transfer of proteins into and across the cell membrane, serving as an ATP-driven molecular motor driving the stepwise translocation of polypeptide chains across the membrane. This chain is Protein translocase subunit SecA, found in Clostridium perfringens (strain SM101 / Type A).